We begin with the raw amino-acid sequence, 273 residues long: Non-homologous end joining protein Ku (273 aa).

Positions 10-193 (AFGLVNVPVK…KVEIKPAELK (184 aa)) constitute a Ku domain. The tract at residues 111–273 (FLEPDSKSSK…KANSNVPTPP (163 aa)) is sufficient for interaction with LigD.

This sequence belongs to the prokaryotic Ku family. In terms of assembly, homodimer. Interacts with LigD.

With LigD forms a non-homologous end joining (NHEJ) DNA repair enzyme, which repairs dsDNA breaks with reduced fidelity. Binds linear dsDNA with 5'- and 3'- overhangs but not closed circular dsDNA nor ssDNA. Recruits and stimulates the ligase activity of LigD. In Mycobacterium tuberculosis (strain CDC 1551 / Oshkosh), this protein is Non-homologous end joining protein Ku (mku).